A 226-amino-acid polypeptide reads, in one-letter code: Biosynthetic peptidoglycan transglycosylase (226 aa).

Residues 7–29 (VMALSAIGLLLLPYLLTPLYRIG) form a helical membrane-spanning segment.

Belongs to the glycosyltransferase 51 family.

The protein localises to the cell inner membrane. The catalysed reaction is [GlcNAc-(1-&gt;4)-Mur2Ac(oyl-L-Ala-gamma-D-Glu-L-Lys-D-Ala-D-Ala)](n)-di-trans,octa-cis-undecaprenyl diphosphate + beta-D-GlcNAc-(1-&gt;4)-Mur2Ac(oyl-L-Ala-gamma-D-Glu-L-Lys-D-Ala-D-Ala)-di-trans,octa-cis-undecaprenyl diphosphate = [GlcNAc-(1-&gt;4)-Mur2Ac(oyl-L-Ala-gamma-D-Glu-L-Lys-D-Ala-D-Ala)](n+1)-di-trans,octa-cis-undecaprenyl diphosphate + di-trans,octa-cis-undecaprenyl diphosphate + H(+). Its pathway is cell wall biogenesis; peptidoglycan biosynthesis. Functionally, peptidoglycan polymerase that catalyzes glycan chain elongation from lipid-linked precursors. The protein is Biosynthetic peptidoglycan transglycosylase of Nitrobacter winogradskyi (strain ATCC 25391 / DSM 10237 / CIP 104748 / NCIMB 11846 / Nb-255).